The following is a 317-amino-acid chain: Probable F-box protein At2g36090 (317 aa).

Positions 25–74 (IESHILTRLDGATLASVSCASSHLHHLASNEILWSKICRSTWPSCSGGSR) constitute an F-box domain.

The protein is Probable F-box protein At2g36090 of Arabidopsis thaliana (Mouse-ear cress).